Reading from the N-terminus, the 347-residue chain is S-adenosylmethionine:tRNA ribosyltransferase-isomerase (347 aa).

Belongs to the QueA family. Monomer.

The protein resides in the cytoplasm. The catalysed reaction is 7-aminomethyl-7-carbaguanosine(34) in tRNA + S-adenosyl-L-methionine = epoxyqueuosine(34) in tRNA + adenine + L-methionine + 2 H(+). It functions in the pathway tRNA modification; tRNA-queuosine biosynthesis. Its function is as follows. Transfers and isomerizes the ribose moiety from AdoMet to the 7-aminomethyl group of 7-deazaguanine (preQ1-tRNA) to give epoxyqueuosine (oQ-tRNA). The polypeptide is S-adenosylmethionine:tRNA ribosyltransferase-isomerase (Ectopseudomonas mendocina (strain ymp) (Pseudomonas mendocina)).